The following is a 385-amino-acid chain: tRNA-specific 2-thiouridylase MnmA (385 aa).

ATP is bound by residues A18–S25 and L44. The active-site Nucleophile is the C112. The cysteines at positions 112 and 209 are disulfide-linked. G136 lines the ATP pocket. The segment at R159–Q161 is interaction with tRNA. The Cysteine persulfide intermediate role is filled by C209.

It belongs to the MnmA/TRMU family.

Its subcellular location is the cytoplasm. The enzyme catalyses S-sulfanyl-L-cysteinyl-[protein] + uridine(34) in tRNA + AH2 + ATP = 2-thiouridine(34) in tRNA + L-cysteinyl-[protein] + A + AMP + diphosphate + H(+). Its function is as follows. Catalyzes the 2-thiolation of uridine at the wobble position (U34) of tRNA, leading to the formation of s(2)U34. This Methylorubrum extorquens (strain PA1) (Methylobacterium extorquens) protein is tRNA-specific 2-thiouridylase MnmA.